A 204-amino-acid chain; its full sequence is Large ribosomal subunit protein uL4 (204 aa).

The interval Thr49 to Ser75 is disordered.

This sequence belongs to the universal ribosomal protein uL4 family. Part of the 50S ribosomal subunit.

Its function is as follows. One of the primary rRNA binding proteins, this protein initially binds near the 5'-end of the 23S rRNA. It is important during the early stages of 50S assembly. It makes multiple contacts with different domains of the 23S rRNA in the assembled 50S subunit and ribosome. Forms part of the polypeptide exit tunnel. The sequence is that of Large ribosomal subunit protein uL4 from Campylobacter lari (strain RM2100 / D67 / ATCC BAA-1060).